Consider the following 137-residue polypeptide: DNA-binding protein H-NS (137 aa).

A DNA-binding region spans residues 112-117; the sequence is QGRTPA.

The protein belongs to the histone-like protein H-NS family. As to quaternary structure, homodimer that oligomerizes on DNA into higher-order complexes that form bridges between disparate regions of DNA compacting it. Interacts with Hha, YdgT and StpA.

It is found in the cytoplasm. It localises to the nucleoid. Functionally, a DNA-binding protein implicated in transcriptional repression and chromosome organization and compaction. Binds nucleation sites in AT-rich DNA and bridges them, forming higher-order nucleoprotein complexes and condensing the chromosome. As many horizontally transferred genes are AT-rich, it plays a central role in silencing foreign genes. A subset of genes are repressed by H-NS in association with other proteins. The chain is DNA-binding protein H-NS (hns) from Salmonella paratyphi A (strain ATCC 9150 / SARB42).